The sequence spans 386 residues: S-adenosylmethionine synthase (386 aa).

H16 provides a ligand contact to ATP. D18 contributes to the Mg(2+) binding site. K(+) is bound at residue E44. L-methionine-binding residues include E57 and Q100. Residues Q100–R110 are flexible loop. ATP-binding positions include D164–K166, K230–F231, D239, R245–K246, A262, and K266. D239 serves as a coordination point for L-methionine. Position 270 (K270) interacts with L-methionine.

The protein belongs to the AdoMet synthase family. Homotetramer; dimer of dimers. Requires Mg(2+) as cofactor. K(+) serves as cofactor.

It localises to the cytoplasm. It catalyses the reaction L-methionine + ATP + H2O = S-adenosyl-L-methionine + phosphate + diphosphate. The protein operates within amino-acid biosynthesis; S-adenosyl-L-methionine biosynthesis; S-adenosyl-L-methionine from L-methionine: step 1/1. In terms of biological role, catalyzes the formation of S-adenosylmethionine (AdoMet) from methionine and ATP. The overall synthetic reaction is composed of two sequential steps, AdoMet formation and the subsequent tripolyphosphate hydrolysis which occurs prior to release of AdoMet from the enzyme. The polypeptide is S-adenosylmethionine synthase (Wolinella succinogenes (strain ATCC 29543 / DSM 1740 / CCUG 13145 / JCM 31913 / LMG 7466 / NCTC 11488 / FDC 602W) (Vibrio succinogenes)).